The chain runs to 250 residues: Probable 2' cyclic ADP-D-ribose synthase TcpB (250 aa).

The tract at residues 1–46 (MSKEKQAQSKAHKAQQAISSAKSLSTQKSKMSELERATRDGAAIGK) is disordered. A compositionally biased stretch (low complexity) spans 14-23 (AQQAISSAKS). Residues 30–39 (KMSELERATR) are compositionally biased toward basic and acidic residues. Residues 117–250 (EEYDFFISHA…EIAKELHSLI (134 aa)) enclose the TIR domain. The active site involves glutamate 192.

In terms of assembly, homodimer. Interacts with host TIRAP. Interacts with host TLR4, abolishes the interaction of host TIRAP with TLR4.

Its subcellular location is the secreted. The protein resides in the host cell membrane. It carries out the reaction NAD(+) + H2O = ADP-D-ribose + nicotinamide + H(+). The enzyme catalyses NAD(+) = 2'cADPR + nicotinamide + H(+). Its function is as follows. Virulence factor that interferes with host Toll-like receptor 2 (TLR2) signaling, resulting in the reduction of dendritic cell maturation, inhibition of pro-inflammatory cytokine secretion and impaired NF-kappa-B activation in macrophages. Also acts on host TLR4. Binds host lipids. Has NAD(+) hydrolase (NADase) activity, catalyzes cleavage of NAD(+) into ADP-D-ribose (ADPR) and nicotinamide, also generates a cyclization variant of cyclic ADPR (cADPR), termed v-cADPR (probably 2'cADPR). The polypeptide is Probable 2' cyclic ADP-D-ribose synthase TcpB (Brucella abortus (strain 2308)).